Here is an 833-residue protein sequence, read N- to C-terminus: Leucine--tRNA ligase (833 aa).

Residues 41 to 52 carry the 'HIGH' region motif; the sequence is PYPSGAGLHVGH. The 'KMSKS' region signature appears at 610 to 614; the sequence is KMSKS. Lysine 613 is an ATP binding site.

It belongs to the class-I aminoacyl-tRNA synthetase family.

It localises to the cytoplasm. It catalyses the reaction tRNA(Leu) + L-leucine + ATP = L-leucyl-tRNA(Leu) + AMP + diphosphate. This is Leucine--tRNA ligase from Streptococcus pyogenes serotype M4 (strain MGAS10750).